Reading from the N-terminus, the 782-residue chain is Chondroitin proteoglycan 4 (782 aa).

The signal sequence occupies residues 1 to 18; that stretch reads MRLVYSLIFLLFIPFSHP. N-linked (GlcNAc...) asparagine glycans are attached at residues Asn76, Asn208, Asn462, Asn468, Asn474, and Asn503. Residues 513-726 are disordered; it reads ISEKSTEESS…EDQGSGNYKK (214 aa). Low complexity-rich tracts occupy residues 520–532, 548–566, 573–612, 662–672, and 688–722; these read ESSG…SGDG, SGSS…SSGE, SSGS…SSDT, FGESSGSSGES, and SGSS…QGSG. N-linked (GlcNAc...) asparagine glycosylation is present at Asn559. Ser691 carries O-linked (Xyl...) (chondroitin sulfate) serine glycosylation. A glycan (N-linked (GlcNAc...) asparagine) is linked at Asn699. Ser701, Ser704, Ser708, Ser714, and Ser721 each carry an O-linked (Xyl...) (chondroitin sulfate) serine glycan. An N-linked (GlcNAc...) asparagine glycan is attached at Asn743.

The polypeptide is Chondroitin proteoglycan 4 (Caenorhabditis elegans).